Reading from the N-terminus, the 35-residue chain is Photosystem II reaction center protein T (35 aa).

The chain crosses the membrane as a helical span at residues Ala-3–Phe-23.

This sequence belongs to the PsbT family. In terms of assembly, PSII is composed of 1 copy each of membrane proteins PsbA, PsbB, PsbC, PsbD, PsbE, PsbF, PsbH, PsbI, PsbJ, PsbK, PsbL, PsbM, PsbT, PsbY, PsbZ, Psb30/Ycf12, at least 3 peripheral proteins of the oxygen-evolving complex and a large number of cofactors. It forms dimeric complexes.

It localises to the plastid. The protein resides in the chloroplast thylakoid membrane. Found at the monomer-monomer interface of the photosystem II (PS II) dimer, plays a role in assembly and dimerization of PSII. PSII is a light-driven water plastoquinone oxidoreductase, using light energy to abstract electrons from H(2)O, generating a proton gradient subsequently used for ATP formation. The polypeptide is Photosystem II reaction center protein T (Taxus brevifolia (Pacific yew)).